A 313-amino-acid polypeptide reads, in one-letter code: Putative S-adenosyl-L-methionine-dependent methyltransferase MAP_3563 (313 aa).

Residues Asp-139 and 168 to 169 contribute to the S-adenosyl-L-methionine site; that span reads DL.

It belongs to the UPF0677 family.

Exhibits S-adenosyl-L-methionine-dependent methyltransferase activity. In Mycolicibacterium paratuberculosis (strain ATCC BAA-968 / K-10) (Mycobacterium paratuberculosis), this protein is Putative S-adenosyl-L-methionine-dependent methyltransferase MAP_3563.